Reading from the N-terminus, the 462-residue chain is Malonyl-coenzyme:anthocyanin 5-O-glucoside-6'''-O-malonyltransferase (462 aa).

Catalysis depends on proton acceptor residues histidine 167 and aspartate 390.

This sequence belongs to the plant acyltransferase family. As to expression, detected in petals and sepals, and at lower levels in bracts and red stems.

The catalysed reaction is pelargonidin 3-O-(6-O-[(E)-caffeoyl]-beta-D-glucoside) 5-O-beta-D-glucoside + malonyl-CoA = 4'''-demalonylsalvianin + CoA. It functions in the pathway pigment biosynthesis; anthocyanin biosynthesis. Its activity is regulated as follows. Completely inhibited by 10 mM p-coumaric acid, this inhibition is rapid, reversible and non-competitive. Completely inhibited by 0.1 mM Cu(2+), 0.1 mM Hg(2+) and 10 mM caffeic acid. Partially inhibited by 5 mM N-ethylmaleimide, 1 mM diethylpyrocarbonate and 1 mM acetyl-CoA. Catalyzes the transfer of a malonyl group from malonyl-CoA to the 6'''-hydroxyl group of the 5-glucosyl moiety of anthocyanins. Active towards bisdemalonylsalvianin (pelargonidin 3-O-(6-caffeoyl-beta-D-glucoside) 5-O-beta-D-glucoside) and shisonin, but not towards nodemalonylsalvianin, salvianin, pelargonidin 3,5-diglucoside and delphinidin 3,5-diglucoside. The chain is Malonyl-coenzyme:anthocyanin 5-O-glucoside-6'''-O-malonyltransferase from Salvia splendens (Scarlet sage).